Consider the following 111-residue polypeptide: UPF0145 protein BTH_I2656 (111 aa).

This sequence belongs to the UPF0145 family.

This is UPF0145 protein BTH_I2656 from Burkholderia thailandensis (strain ATCC 700388 / DSM 13276 / CCUG 48851 / CIP 106301 / E264).